A 333-amino-acid chain; its full sequence is GTP 3',8-cyclase (333 aa).

A Radical SAM core domain is found at 7–221; sequence KFGRVHDYIR…FEACNEAGYE (215 aa). GTP is bound at residue R16. C23 and C27 together coordinate [4Fe-4S] cluster. Residue Y29 participates in S-adenosyl-L-methionine binding. A [4Fe-4S] cluster-binding site is contributed by C30. R66 serves as a coordination point for GTP. G70 provides a ligand contact to S-adenosyl-L-methionine. T97 lines the GTP pocket. S121 contributes to the S-adenosyl-L-methionine binding site. K158 contacts GTP. Position 192 (M192) interacts with S-adenosyl-L-methionine. Positions 257 and 260 each coordinate [4Fe-4S] cluster. 262-264 contributes to the GTP binding site; that stretch reads RLR. [4Fe-4S] cluster is bound at residue C274.

This sequence belongs to the radical SAM superfamily. MoaA family. In terms of assembly, monomer and homodimer. [4Fe-4S] cluster serves as cofactor.

It catalyses the reaction GTP + AH2 + S-adenosyl-L-methionine = (8S)-3',8-cyclo-7,8-dihydroguanosine 5'-triphosphate + 5'-deoxyadenosine + L-methionine + A + H(+). The protein operates within cofactor biosynthesis; molybdopterin biosynthesis. Functionally, catalyzes the cyclization of GTP to (8S)-3',8-cyclo-7,8-dihydroguanosine 5'-triphosphate. The sequence is that of GTP 3',8-cyclase from Listeria monocytogenes serotype 4b (strain CLIP80459).